The sequence spans 101 residues: Protein PIP-1 (101 aa).

An N-terminal signal peptide occupies residues 1 to 23; sequence MGKCLLLPLLLVVLSSLLGFPQA. The region spanning 24–101 is the UPAR/Ly6 domain; the sequence is LECFQCQRVS…CHDSPFCNKF (78 aa). Disulfide bonds link Cys-26/Cys-53, Cys-29/Cys-38, Cys-45/Cys-71, Cys-75/Cys-91, and Cys-92/Cys-98. Residue Asn-84 is glycosylated (N-linked (GlcNAc...) asparagine).

The protein localises to the secreted. The protein is Protein PIP-1 of Sus scrofa (Pig).